Reading from the N-terminus, the 162-residue chain is Photosystem II extrinsic protein V (162 aa).

Residues 1-25 (MFKKFSALFTLLFTLCLVNPMLVYS) form the signal peptide. Residues cysteine 62, cysteine 65, histidine 66, and histidine 117 each coordinate heme c.

It belongs to the cytochrome c family. PsbV subfamily. PSII is composed of 1 copy each of membrane proteins PsbA, PsbB, PsbC, PsbD, PsbE, PsbF, PsbH, PsbI, PsbJ, PsbK, PsbL, PsbM, PsbT, PsbX, PsbY, PsbZ, Psb30/Ycf12, at least 3 peripheral proteins of the oxygen-evolving complex and a large number of cofactors. It forms dimeric complexes. Heme c serves as cofactor.

It is found in the plastid. It localises to the chloroplast thylakoid membrane. One of the extrinsic, lumenal subunits of photosystem II (PSII). PSII is a light-driven water plastoquinone oxidoreductase, using light energy to abstract electrons from H(2)O, generating a proton gradient subsequently used for ATP formation. The extrinsic proteins stabilize the structure of photosystem II oxygen-evolving complex (OEC), the ion environment of oxygen evolution and protect the OEC against heat-induced inactivation. In Guillardia theta (Cryptophyte), this protein is Photosystem II extrinsic protein V.